We begin with the raw amino-acid sequence, 135 residues long: Small ribosomal subunit protein uS12c (135 aa).

This sequence belongs to the universal ribosomal protein uS12 family. Part of the 30S ribosomal subunit.

It localises to the plastid. The protein localises to the chloroplast. Its function is as follows. With S4 and S5 plays an important role in translational accuracy. Located at the interface of the 30S and 50S subunits. The protein is Small ribosomal subunit protein uS12c (rps12) of Adiantum capillus-veneris (Maidenhair fern).